The primary structure comprises 353 residues: tRNA-splicing endonuclease (353 aa).

Residues Tyr-289, His-300, and Lys-331 contribute to the active site.

Belongs to the tRNA-intron endonuclease family. Archaeal long subfamily. Homodimer.

It catalyses the reaction pretRNA = a 3'-half-tRNA molecule with a 5'-OH end + a 5'-half-tRNA molecule with a 2',3'-cyclic phosphate end + an intron with a 2',3'-cyclic phosphate and a 5'-hydroxyl terminus.. Endonuclease that removes tRNA introns. Cleaves pre-tRNA at the 5'- and 3'-splice sites to release the intron. The products are an intron and two tRNA half-molecules bearing 2',3' cyclic phosphate and 5'-OH termini. Recognizes a pseudosymmetric substrate in which 2 bulged loops of 3 bases are separated by a stem of 4 bp. This is tRNA-splicing endonuclease from Methanosarcina mazei (strain ATCC BAA-159 / DSM 3647 / Goe1 / Go1 / JCM 11833 / OCM 88) (Methanosarcina frisia).